A 445-amino-acid polypeptide reads, in one-letter code: MAVGNGLILYHILGLASCIALVYFSLGEVDLRDALPSLPFSGGASRAAAASLPFVERRGKRLFLDGRPFYINGWNSYWLMDLAVEPNTRPRVSSMFRTAVSMGLTVCRTWAFNDGSYNALQLSPGHFDERVFKALDRVVAEASEHGVRLILSLANNLDAYGGKRQYVRWAWEEGVGLTASNDSFFFDPAIRDYFKVYLKTLLMRKNHLTGLEYRDDPTILAWELMNEPRCTSDPSGDTLQRWMEEMSAYVKSIDKKHLLTVGTEGFYGPTSSQEKLNINPGEWFPNNYGADFIRNSKIQDIDFASVHVYPDNWLQHASLDEKLKFMTRWITAHVEDGDGELEKPVLVTEFGLSHQVEGFEDAHRDVLYRAVYDIVHGSARRGGAAGGALVWQLAAEGMEEYHDGFSIVPSERPSMMRLIKEQSCRLAAVRYGEEGARKVLKTVCA.

The signal sequence occupies residues 1–27 (MAVGNGLILYHILGLASCIALVYFSLG). Residue Trp-110 coordinates substrate. An N-linked (GlcNAc...) asparagine glycan is attached at Asn-181. Substrate is bound at residue Asn-226. Catalysis depends on Glu-227, which acts as the Proton donor. Residue Tyr-309 participates in substrate binding. The active-site Nucleophile is Glu-349. Trp-391 contacts substrate.

This sequence belongs to the glycosyl hydrolase 5 (cellulase A) family. As to expression, expressed in stems and seeds, and at lower levels in roots and leaves.

Its subcellular location is the secreted. The catalysed reaction is Random hydrolysis of (1-&gt;4)-beta-D-mannosidic linkages in mannans, galactomannans and glucomannans.. In Oryza sativa subsp. japonica (Rice), this protein is Mannan endo-1,4-beta-mannosidase 2 (MAN2).